The sequence spans 481 residues: Alginate biosynthesis protein AlgA (481 aa).

The protein belongs to the mannose-6-phosphate isomerase type 2 family. Monomer. The cofactor is Co(2+).

It carries out the reaction D-mannose 6-phosphate = D-fructose 6-phosphate. The catalysed reaction is alpha-D-mannose 1-phosphate + GTP + H(+) = GDP-alpha-D-mannose + diphosphate. The protein operates within nucleotide-sugar biosynthesis; GDP-alpha-D-mannose biosynthesis; GDP-alpha-D-mannose from alpha-D-mannose 1-phosphate (GTP route): step 1/1. Its pathway is nucleotide-sugar biosynthesis; GDP-alpha-D-mannose biosynthesis; alpha-D-mannose 1-phosphate from D-fructose 6-phosphate: step 1/2. In terms of biological role, produces a precursor for alginate polymerization. The alginate layer provides a protective barrier against host immune defenses and antibiotics. The sequence is that of Alginate biosynthesis protein AlgA (algA) from Pseudomonas aeruginosa (strain ATCC 15692 / DSM 22644 / CIP 104116 / JCM 14847 / LMG 12228 / 1C / PRS 101 / PAO1).